An 836-amino-acid polypeptide reads, in one-letter code: Protein O-mannosyl-transferase tmtc2 (836 aa).

The helical transmembrane segment at 1 to 21 (MIAELLSSALGLLLYLNTLGA) threads the bilayer. Topologically, residues 22–77 (DFCYDDSRAIKTNQDLLPETPWNHIFFNDFWGTLLTHSGSHKSYRPLCTLSFRLNY) are extracellular. Residues 78 to 98 (LFGGLDPWNYHLVNVLLHSAV) traverse the membrane as a helical segment. At 99 to 107 (TGLFTNLCK) the chain is on the cytoplasmic side. Residues 108–128 (ALFGSGCWTLIAGLLFASHPI) form a helical membrane-spanning segment. Topologically, residues 129 to 132 (HTEA) are extracellular. The chain crosses the membrane as a helical span at residues 133 to 153 (VSGIVGRADVGSGLFFLLSLL). Residues 154-164 (CYMKHCSTRGY) are Cytoplasmic-facing. The chain crosses the membrane as a helical span at residues 165–185 (SLSSWCWILCAGFWAACSMLW). Over 186–188 (KEQ) the chain is Extracellular. The helical transmembrane segment at 189 to 209 (GVTVLAVSAVYDVFVFHKLKM) threads the bilayer. The Cytoplasmic portion of the chain corresponds to 210–220 (NQIISVVFKEK). The chain crosses the membrane as a helical span at residues 221–241 (NVSFFFSVGLLFAWGVILLGA). At 242–312 (RFYWMGNTPP…KTITDWRNIH (71 aa)) the chain is on the extracellular side. The helical transmembrane segment at 313–333 (TVAFYILLILLAYSSLKGSAI) threads the bilayer. At 334–392 (KRDCNGKVFMNGKQNTNGHSCQSDLEHKNAEQNPVIASKLENGVKHHNSHEMQLPSTEN) the chain is on the cytoplasmic side. The chain crosses the membrane as a helical span at residues 393-413 (IVVLALSLLIVPFVPASNLFF). A topological domain (extracellular) is located at residue tyrosine 414. The helical transmembrane segment at 415 to 435 (VGFVIAERVLYIPSMGFCLLV) threads the bilayer. Topologically, residues 436–449 (TVGARALYIKAQKN) are cytoplasmic. The chain crosses the membrane as a helical span at residues 450 to 470 (ILKNLLFYATAALIVFYGLKT). Over 471 to 836 (VVRNGDWKNE…EKQGLKNSKT (366 aa)) the chain is Extracellular. 9 TPR repeats span residues 493 to 526 (AKAW…RSNM), 527 to 560 (ADML…RPTL), 561 to 594 (ASGY…PDEN), 606 to 639 (TSCL…MPRQ), 643 to 676 (QSLY…KPDH), 677 to 710 (IPAH…DPNK), 711 to 744 (GNCY…DSSE), 745 to 778 (FDVV…RQNY), and 779 to 812 (PAAL…KPDD).

It belongs to the TMTC family.

It localises to the membrane. The protein localises to the endoplasmic reticulum. It catalyses the reaction a di-trans,poly-cis-dolichyl beta-D-mannosyl phosphate + L-seryl-[protein] = 3-O-(alpha-D-mannosyl)-L-seryl-[protein] + a di-trans,poly-cis-dolichyl phosphate + H(+). The enzyme catalyses a di-trans,poly-cis-dolichyl beta-D-mannosyl phosphate + L-threonyl-[protein] = 3-O-(alpha-D-mannosyl)-L-threonyl-[protein] + a di-trans,poly-cis-dolichyl phosphate + H(+). It participates in protein modification; protein glycosylation. Transfers mannosyl residues to the hydroxyl group of serine or threonine residues. This is Protein O-mannosyl-transferase tmtc2 (tmtc2) from Xenopus laevis (African clawed frog).